The primary structure comprises 169 residues: Peptide deformylase (169 aa).

The Fe cation site is built by C94 and H136. E137 is a catalytic residue. H140 is a binding site for Fe cation.

It belongs to the polypeptide deformylase family. Fe(2+) serves as cofactor.

It catalyses the reaction N-terminal N-formyl-L-methionyl-[peptide] + H2O = N-terminal L-methionyl-[peptide] + formate. In terms of biological role, removes the formyl group from the N-terminal Met of newly synthesized proteins. Requires at least a dipeptide for an efficient rate of reaction. N-terminal L-methionine is a prerequisite for activity but the enzyme has broad specificity at other positions. This is Peptide deformylase from Phenylobacterium zucineum (strain HLK1).